The following is a 223-amino-acid chain: RNA-free ribonuclease P (223 aa).

It belongs to the HARP family.

It carries out the reaction Endonucleolytic cleavage of RNA, removing 5'-extranucleotides from tRNA precursor.. RNA-free RNase P that catalyzes the removal of the 5'-leader sequence from pre-tRNA to produce the mature 5'-terminus. The chain is RNA-free ribonuclease P from Methanococcus maripaludis (strain C6 / ATCC BAA-1332).